The chain runs to 157 residues: DNA gyrase inhibitor 2 (157 aa).

The protein belongs to the DNA gyrase inhibitor family. As to quaternary structure, interacts with DNA gyrase.

It is found in the cytoplasm. Inhibits the supercoiling activity of DNA gyrase. Acts by inhibiting DNA gyrase at an early step, prior to (or at the step of) binding of DNA by the gyrase. It protects cells against toxins that target DNA gyrase, by inhibiting activity of these toxins and reducing the formation of lethal double-strand breaks in the cell. The chain is DNA gyrase inhibitor 2 from Dickeya dadantii (strain 3937) (Erwinia chrysanthemi (strain 3937)).